The sequence spans 495 residues: UDP-N-acetylmuramoyl-L-alanyl-D-glutamate--2,6-diaminopimelate ligase (495 aa).

Ser-29 contributes to the UDP-N-acetyl-alpha-D-muramoyl-L-alanyl-D-glutamate binding site. Residue 111-117 participates in ATP binding; sequence GTNGKTS. UDP-N-acetyl-alpha-D-muramoyl-L-alanyl-D-glutamate is bound by residues 153-154, Ser-180, Gln-186, and Arg-188; that span reads TT. N6-carboxylysine is present on Lys-220. Residues Arg-384, 408–411, Gly-459, and Glu-463 each bind meso-2,6-diaminopimelate; that span reads DNPR. The Meso-diaminopimelate recognition motif motif lies at 408–411; that stretch reads DNPR.

It belongs to the MurCDEF family. MurE subfamily. It depends on Mg(2+) as a cofactor. Post-translationally, carboxylation is probably crucial for Mg(2+) binding and, consequently, for the gamma-phosphate positioning of ATP.

The protein resides in the cytoplasm. It catalyses the reaction UDP-N-acetyl-alpha-D-muramoyl-L-alanyl-D-glutamate + meso-2,6-diaminopimelate + ATP = UDP-N-acetyl-alpha-D-muramoyl-L-alanyl-gamma-D-glutamyl-meso-2,6-diaminopimelate + ADP + phosphate + H(+). Its pathway is cell wall biogenesis; peptidoglycan biosynthesis. Catalyzes the addition of meso-diaminopimelic acid to the nucleotide precursor UDP-N-acetylmuramoyl-L-alanyl-D-glutamate (UMAG) in the biosynthesis of bacterial cell-wall peptidoglycan. The protein is UDP-N-acetylmuramoyl-L-alanyl-D-glutamate--2,6-diaminopimelate ligase of Xylella fastidiosa (strain 9a5c).